Reading from the N-terminus, the 366-residue chain is Alanine racemase (366 aa).

K40 acts as the Proton acceptor; specific for D-alanine in catalysis. N6-(pyridoxal phosphate)lysine is present on K40. R136 contacts substrate. Y263 (proton acceptor; specific for L-alanine) is an active-site residue. M310 contacts substrate.

The protein belongs to the alanine racemase family. The cofactor is pyridoxal 5'-phosphate.

It catalyses the reaction L-alanine = D-alanine. It functions in the pathway amino-acid biosynthesis; D-alanine biosynthesis; D-alanine from L-alanine: step 1/1. Functionally, catalyzes the interconversion of L-alanine and D-alanine. May also act on other amino acids. The chain is Alanine racemase (alr) from Streptococcus equi subsp. equi (strain 4047).